The chain runs to 465 residues: Ribulose bisphosphate carboxylase large chain (465 aa).

At Lys-4 the chain carries N6,N6,N6-trimethyllysine. The substrate site is built by Asn-113 and Thr-163. Lys-165 functions as the Proton acceptor in the catalytic mechanism. Residue Lys-167 participates in substrate binding. Mg(2+) contacts are provided by Lys-191, Asp-193, and Glu-194. An N6-carboxylysine modification is found at Lys-191. His-284 acts as the Proton acceptor in catalysis. Residues Arg-285, His-317, and Ser-369 each coordinate substrate.

Belongs to the RuBisCO large chain family. Type I subfamily. Heterohexadecamer of 8 large chains and 8 small chains; disulfide-linked. The disulfide link is formed within the large subunit homodimers. Requires Mg(2+) as cofactor. In terms of processing, the disulfide bond which can form in the large chain dimeric partners within the hexadecamer appears to be associated with oxidative stress and protein turnover.

It localises to the plastid. Its subcellular location is the chloroplast. The enzyme catalyses 2 (2R)-3-phosphoglycerate + 2 H(+) = D-ribulose 1,5-bisphosphate + CO2 + H2O. The catalysed reaction is D-ribulose 1,5-bisphosphate + O2 = 2-phosphoglycolate + (2R)-3-phosphoglycerate + 2 H(+). RuBisCO catalyzes two reactions: the carboxylation of D-ribulose 1,5-bisphosphate, the primary event in carbon dioxide fixation, as well as the oxidative fragmentation of the pentose substrate in the photorespiration process. Both reactions occur simultaneously and in competition at the same active site. This Senega cruciata (Cross-leaved milkwort) protein is Ribulose bisphosphate carboxylase large chain.